The following is a 375-amino-acid chain: Probable protein-glutamate methylesterase BB_0415 (375 aa).

In terms of domain architecture, Response regulatory spans 6–120 (SVLIIEYFAV…SHEIKKEQII (115 aa)). In terms of domain architecture, CheB-type methylesterase spans 183–375 (KLRKFDIIAI…KLLKAILINS (193 aa)). Active-site residues include S195, H221, and D317.

The enzyme catalyses [protein]-L-glutamate 5-O-methyl ester + H2O = L-glutamyl-[protein] + methanol + H(+). This Borreliella burgdorferi (strain ATCC 35210 / DSM 4680 / CIP 102532 / B31) (Borrelia burgdorferi) protein is Probable protein-glutamate methylesterase BB_0415.